The sequence spans 38 residues: Conotoxin r7a (38 aa).

A propeptide spanning residues 1–5 is cleaved from the precursor; sequence APAKR. Position 6 is a 6'-bromotryptophan (W6). 4-carboxyglutamate is present on residues E10 and E11. Cystine bridges form between C12/C26, C19/C30, and C25/C35. Residue W15 is modified to 6'-bromotryptophan. 2 positions are modified to 4-carboxyglutamate: E20 and E31. W38 bears the 6'-bromotryptophan mark.

Belongs to the conotoxin O2 superfamily. As to expression, expressed by the venom duct.

The protein resides in the secreted. Its function is as follows. Induces a sleep-like state in mice. In Conus radiatus (Rayed cone), this protein is Conotoxin r7a.